The following is a 103-amino-acid chain: Large ribosomal subunit protein uL23 (103 aa).

The protein belongs to the universal ribosomal protein uL23 family. Part of the 50S ribosomal subunit. Contacts protein L29, and trigger factor when it is bound to the ribosome.

Functionally, one of the early assembly proteins it binds 23S rRNA. One of the proteins that surrounds the polypeptide exit tunnel on the outside of the ribosome. Forms the main docking site for trigger factor binding to the ribosome. In Zymomonas mobilis subsp. mobilis (strain ATCC 31821 / ZM4 / CP4), this protein is Large ribosomal subunit protein uL23.